Consider the following 441-residue polypeptide: Trigger factor (441 aa).

A PPIase FKBP-type domain is found at 175–257; that stretch reads GDFISLSLHV…VNAVIEVVAP (83 aa).

This sequence belongs to the FKBP-type PPIase family. Tig subfamily.

It is found in the cytoplasm. The enzyme catalyses [protein]-peptidylproline (omega=180) = [protein]-peptidylproline (omega=0). In terms of biological role, involved in protein export. Acts as a chaperone by maintaining the newly synthesized protein in an open conformation. Functions as a peptidyl-prolyl cis-trans isomerase. The sequence is that of Trigger factor from Chlamydia abortus (strain DSM 27085 / S26/3) (Chlamydophila abortus).